Consider the following 227-residue polypeptide: Mediator of RNA polymerase II transcription subunit 18 (227 aa).

Belongs to the Mediator complex subunit 18 family. As to quaternary structure, component of the Mediator complex.

The protein localises to the nucleus. Component of the Mediator complex, a coactivator involved in the regulated transcription of nearly all RNA polymerase II-dependent genes. Mediator functions as a bridge to convey information from gene-specific regulatory proteins to the basal RNA polymerase II transcription machinery. Mediator is recruited to promoters by direct interactions with regulatory proteins and serves as a scaffold for the assembly of a functional preinitiation complex with RNA polymerase II and the general transcription factors. The chain is Mediator of RNA polymerase II transcription subunit 18 (mdt-18) from Caenorhabditis briggsae.